A 233-amino-acid chain; its full sequence is 2,3,4,5-tetrahydropyridine-2,6-dicarboxylate N-acetyltransferase (233 aa).

This sequence belongs to the transferase hexapeptide repeat family. DapH subfamily.

It catalyses the reaction (S)-2,3,4,5-tetrahydrodipicolinate + acetyl-CoA + H2O = L-2-acetamido-6-oxoheptanedioate + CoA. Its pathway is amino-acid biosynthesis; L-lysine biosynthesis via DAP pathway; LL-2,6-diaminopimelate from (S)-tetrahydrodipicolinate (acetylase route): step 1/3. Catalyzes the transfer of an acetyl group from acetyl-CoA to tetrahydrodipicolinate. The polypeptide is 2,3,4,5-tetrahydropyridine-2,6-dicarboxylate N-acetyltransferase (Petrotoga mobilis (strain DSM 10674 / SJ95)).